The chain runs to 348 residues: GMP reductase 2 (348 aa).

NADP(+) is bound by residues 26–27, K78, 129–131, and 180–181; these read SR, DVA, and IG. 3 residues coordinate K(+): G181, G183, and C186. C186 functions as the Thioimidate intermediate in the catalytic mechanism. The Proton donor/acceptor role is filled by T188. Residue R189 coordinates K(+). GMP contacts are provided by residues 219–221, 242–243, 268–270, and 286–290; these read DGG, GG, GMS, and RASEG. NADP(+) is bound by residues M269 and 285–286; that span reads YR. Residue K291 is modified to N6-acetyllysine. 314 to 317 is an NADP(+) binding site; it reads STCT.

Belongs to the IMPDH/GMPR family. GuaC type 1 subfamily. In terms of assembly, homotetramer.

It carries out the reaction IMP + NH4(+) + NADP(+) = GMP + NADPH + 2 H(+). Its function is as follows. Catalyzes the irreversible NADPH-dependent deamination of GMP to IMP. It functions in the conversion of nucleobase, nucleoside and nucleotide derivatives of G to A nucleotides, and in maintaining the intracellular balance of A and G nucleotides. Plays a role in modulating cellular differentiation. This Mus musculus (Mouse) protein is GMP reductase 2.